Consider the following 476-residue polypeptide: Glycogen synthase (476 aa).

Residue K15 coordinates ADP-alpha-D-glucose.

This sequence belongs to the glycosyltransferase 1 family. Bacterial/plant glycogen synthase subfamily.

The enzyme catalyses [(1-&gt;4)-alpha-D-glucosyl](n) + ADP-alpha-D-glucose = [(1-&gt;4)-alpha-D-glucosyl](n+1) + ADP + H(+). It participates in glycan biosynthesis; glycogen biosynthesis. In terms of biological role, synthesizes alpha-1,4-glucan chains using ADP-glucose. The polypeptide is Glycogen synthase (Streptococcus agalactiae serotype III (strain NEM316)).